Here is a 417-residue protein sequence, read N- to C-terminus: Serine hydroxymethyltransferase (417 aa).

(6S)-5,6,7,8-tetrahydrofolate is bound by residues Leu121 and 125-127 (GHL). At Lys230 the chain carries N6-(pyridoxal phosphate)lysine. 355–357 (SPF) is a (6S)-5,6,7,8-tetrahydrofolate binding site.

Belongs to the SHMT family. Homodimer. Pyridoxal 5'-phosphate serves as cofactor.

It is found in the cytoplasm. It carries out the reaction (6R)-5,10-methylene-5,6,7,8-tetrahydrofolate + glycine + H2O = (6S)-5,6,7,8-tetrahydrofolate + L-serine. Its pathway is one-carbon metabolism; tetrahydrofolate interconversion. It participates in amino-acid biosynthesis; glycine biosynthesis; glycine from L-serine: step 1/1. Functionally, catalyzes the reversible interconversion of serine and glycine with tetrahydrofolate (THF) serving as the one-carbon carrier. This reaction serves as the major source of one-carbon groups required for the biosynthesis of purines, thymidylate, methionine, and other important biomolecules. Also exhibits THF-independent aldolase activity toward beta-hydroxyamino acids, producing glycine and aldehydes, via a retro-aldol mechanism. The sequence is that of Serine hydroxymethyltransferase from Legionella pneumophila subsp. pneumophila (strain Philadelphia 1 / ATCC 33152 / DSM 7513).